A 515-amino-acid polypeptide reads, in one-letter code: Chromosomal replication initiator protein DnaA (515 aa).

Positions 1-89 (MVADQAVLSS…LLAISIDANL (89 aa)) are domain I, interacts with DnaA modulators. The tract at residues 89–172 (LQPPRTPSSE…APPSTSAETS (84 aa)) is domain II. 2 disordered regions span residues 90-130 (QPPR…SRRA) and 142-171 (PPAD…SAET). Low complexity-rich tracts occupy residues 102–114 (SSLA…AAAP) and 143–160 (PADV…NGKP). The interval 173–389 (RLNDRYHFET…GALIRVTAFA (217 aa)) is domain III, AAA+ region. 4 residues coordinate ATP: G217, G219, K220, and T221. The segment at 390–515 (SLNRQTVDIE…NEIKRKQRGA (126 aa)) is domain IV, binds dsDNA.

This sequence belongs to the DnaA family. Oligomerizes as a right-handed, spiral filament on DNA at oriC.

The protein resides in the cytoplasm. Functionally, plays an essential role in the initiation and regulation of chromosomal replication. ATP-DnaA binds to the origin of replication (oriC) to initiate formation of the DNA replication initiation complex once per cell cycle. Binds the DnaA box (a 9 base pair repeat at the origin) and separates the double-stranded (ds)DNA. Forms a right-handed helical filament on oriC DNA; dsDNA binds to the exterior of the filament while single-stranded (ss)DNA is stabiized in the filament's interior. The ATP-DnaA-oriC complex binds and stabilizes one strand of the AT-rich DNA unwinding element (DUE), permitting loading of DNA polymerase. After initiation quickly degrades to an ADP-DnaA complex that is not apt for DNA replication. Binds acidic phospholipids. The protein is Chromosomal replication initiator protein DnaA of Micrococcus luteus (strain ATCC 4698 / DSM 20030 / JCM 1464 / CCM 169 / CCUG 5858 / IAM 1056 / NBRC 3333 / NCIMB 9278 / NCTC 2665 / VKM Ac-2230) (Micrococcus lysodeikticus).